We begin with the raw amino-acid sequence, 842 residues long: Protein P (842 aa).

The segment at 1–177 (MPLSYQHFRR…FCGSPYSWEQ (177 aa)) is terminal protein domain (TP). The segment at 178-345 (ELHHGAFLDG…YCLSHLVNLL (168 aa)) is spacer. Residues 186 to 273 (DGPSRMGEES…AKNIASRSAS (88 aa)) are disordered. A compositionally biased stretch (polar residues) spans 223–239 (GPQSQQRPLDRSQQGRS). The polymerase/reverse transcriptase domain (RT) stretch occupies residues 346 to 689 (EDWGPCTEHG…YLNLYPVARQ (344 aa)). In terms of domain architecture, Reverse transcriptase spans 356 to 599 (RHHIRIPRTP…YSLNFMGYVI (244 aa)). The Mg(2+) site is built by aspartate 428, aspartate 550, and aspartate 551.

Belongs to the hepadnaviridae P protein family.

It carries out the reaction DNA(n) + a 2'-deoxyribonucleoside 5'-triphosphate = DNA(n+1) + diphosphate. The enzyme catalyses Endonucleolytic cleavage to 5'-phosphomonoester.. Activated by host HSP70 and HSP40 in vitro to be able to bind the epsilon loop of the pgRNA. Because deletion of the RNase H region renders the protein partly chaperone-independent, the chaperones may be needed indirectly to relieve occlusion of the RNA-binding site by this domain. Inhibited by several reverse-transcriptase inhibitors: Lamivudine, Adefovir and Entecavir. Its function is as follows. Multifunctional enzyme that converts the viral RNA genome into dsDNA in viral cytoplasmic capsids. This enzyme displays a DNA polymerase activity that can copy either DNA or RNA templates, and a ribonuclease H (RNase H) activity that cleaves the RNA strand of RNA-DNA heteroduplexes in a partially processive 3'- to 5'-endonucleasic mode. Neo-synthesized pregenomic RNA (pgRNA) are encapsidated together with the P protein, and reverse-transcribed inside the nucleocapsid. Initiation of reverse-transcription occurs first by binding the epsilon loop on the pgRNA genome, and is initiated by protein priming, thereby the 5'-end of (-)DNA is covalently linked to P protein. Partial (+)DNA is synthesized from the (-)DNA template and generates the relaxed circular DNA (RC-DNA) genome. After budding and infection, the RC-DNA migrates in the nucleus, and is converted into a plasmid-like covalently closed circular DNA (cccDNA). The activity of P protein does not seem to be necessary for cccDNA generation, and is presumably released from (+)DNA by host nuclear DNA repair machinery. In Homo sapiens (Human), this protein is Protein P.